The primary structure comprises 214 residues: Guanylate kinase (214 aa).

One can recognise a Guanylate kinase-like domain in the interval glycine 6–arginine 192. ATP is bound at residue alanine 13 to threonine 20.

The protein belongs to the guanylate kinase family.

The protein localises to the cytoplasm. The catalysed reaction is GMP + ATP = GDP + ADP. Its function is as follows. Essential for recycling GMP and indirectly, cGMP. This Pseudomonas syringae pv. syringae (strain B728a) protein is Guanylate kinase.